Reading from the N-terminus, the 217-residue chain is Leucyl/phenylalanyl-tRNA--protein transferase (217 aa).

The protein belongs to the L/F-transferase family.

Its subcellular location is the cytoplasm. The enzyme catalyses N-terminal L-lysyl-[protein] + L-leucyl-tRNA(Leu) = N-terminal L-leucyl-L-lysyl-[protein] + tRNA(Leu) + H(+). The catalysed reaction is N-terminal L-arginyl-[protein] + L-leucyl-tRNA(Leu) = N-terminal L-leucyl-L-arginyl-[protein] + tRNA(Leu) + H(+). It catalyses the reaction L-phenylalanyl-tRNA(Phe) + an N-terminal L-alpha-aminoacyl-[protein] = an N-terminal L-phenylalanyl-L-alpha-aminoacyl-[protein] + tRNA(Phe). In terms of biological role, functions in the N-end rule pathway of protein degradation where it conjugates Leu, Phe and, less efficiently, Met from aminoacyl-tRNAs to the N-termini of proteins containing an N-terminal arginine or lysine. In Caulobacter vibrioides (strain ATCC 19089 / CIP 103742 / CB 15) (Caulobacter crescentus), this protein is Leucyl/phenylalanyl-tRNA--protein transferase.